We begin with the raw amino-acid sequence, 962 residues long: Glycine dehydrogenase (decarboxylating) (962 aa).

Position 709 is an N6-(pyridoxal phosphate)lysine (K709).

It belongs to the GcvP family. In terms of assembly, the glycine cleavage system is composed of four proteins: P, T, L and H. Pyridoxal 5'-phosphate serves as cofactor.

It catalyses the reaction N(6)-[(R)-lipoyl]-L-lysyl-[glycine-cleavage complex H protein] + glycine + H(+) = N(6)-[(R)-S(8)-aminomethyldihydrolipoyl]-L-lysyl-[glycine-cleavage complex H protein] + CO2. The glycine cleavage system catalyzes the degradation of glycine. The P protein binds the alpha-amino group of glycine through its pyridoxal phosphate cofactor; CO(2) is released and the remaining methylamine moiety is then transferred to the lipoamide cofactor of the H protein. In Shewanella frigidimarina (strain NCIMB 400), this protein is Glycine dehydrogenase (decarboxylating).